We begin with the raw amino-acid sequence, 461 residues long: Histone acetyltransferase KAT5 (461 aa).

In terms of domain architecture, Tudor-knot spans 8–65 (IEGCRLPVLRRNQDNEDEWPLAEILSVKDISGRKLFYVHYIDFNKRLDEWVTHERLDL). K52 bears the N6-acetyllysine mark. The disordered stretch occupies residues 70–168 (FPKKEAKTPT…RMTGSLVSDR (99 aa)). S86 and S90 each carry phosphoserine. Residues 90 to 100 (SPEREVKRKVE) show a composition bias toward basic and acidic residues. 4 positions are modified to N6-acetyllysine; by autocatalysis: K96, K98, K135, and K137. S147 is modified (phosphoserine). The MYST-type HAT domain occupies 175 to 452 (TRMKNIECIE…IDSKCLHFTP (278 aa)). The segment at 208 to 233 (LYLCEFCLKYGRSLKCLQRHLTKCDL) adopts a C2HC MYST-type zinc-finger fold. An N6-acetyllysine; by autocatalysis modification is found at K275. The segment at 316 to 461 (ACILTLPPYQ…PKDWSKRGKW (146 aa)) is interaction with ATF2. Acetyl-CoA contacts are provided by residues 318–320 (ILT) and 325–331 (QRRGYGK). Residue E351 is the Proton donor/acceptor of the active site. The acetyl-CoA site is built by S355 and S364. K378 is covalently cross-linked (Glycyl lysine isopeptide (Lys-Gly) (interchain with G-Cter in SUMO1); alternate). Residue K378 forms a Glycyl lysine isopeptide (Lys-Gly) (interchain with G-Cter in SUMO2); alternate linkage. K399 participates in a covalent cross-link: Glycyl lysine isopeptide (Lys-Gly) (interchain with G-Cter in SUMO1).

Belongs to the MYST (SAS/MOZ) family. Component of the NuA4 histone acetyltransferase complex which contains the catalytic subunit KAT5/TIP60 and the subunits EP400, TRRAP/PAF400, BRD8/SMAP, EPC1, DMAP1/DNMAP1, RUVBL1/TIP49, RUVBL2, ING3, actin, ACTL6A/BAF53A, MORF4L1/MRG15, MORF4L2/MRGX, MRGBP, YEATS4/GAS41, VPS72/YL1 and MEAF6. KAT5/TIP60, EPC1, and ING3 together constitute a minimal HAT complex termed Piccolo NuA4. The NuA4 complex interacts with MYC. Interacts with ATM. Interacts with JADE1. Interacts with PLA2G4A/CPLA2, EDNRA and HDAC7. Interacts with the cytoplasmic tail of APP and APBB1/FE65. Interacts with TRIM24 and TRIM68. Forms a complex with SENP6 and UBE2I in response to UV irradiation. Identified in a complex with HINT1. Interacts with ATF2 and CUL3. Interacts with NR1D2 (via N-terminus). Component of a SWR1-like complex. Interacts with FOXP3. Interacts with ZBTB49. Interacts with SRF. Interacts with ATF3; promoting autoacetylation and deubiquitination by USP7. Interacts with EP300/p300; interaction promotes KAT5 autoacetylation. Interacts with PRKDC; interaction is impaired following KAT5 sumoylation. Interacts with GPR50. In terms of processing, phosphorylated on Ser-86 and Ser-90; enhanced during G2/M phase. The phosphorylated form has a higher activity. Phosphorylation at Ser-90 by CDK1 or CDK9 is a prerequisite for phosphorylation at Ser-86 by GSK3. Phosphorylation at Ser-86 by GSK3 (GSK3A or GSK3B) activates acetyltransferase and acyltransferase activities. Phosphorylation at Ser-90 by CDK9 promotes KAT5 recruitment to chromatin. Phosphorylation by VRK1 following DNA damage promotes KAT5 association with chromatin and histone acetyltransferase activity. Post-translationally, autoacetylated. Autoacetylation is required for histone acetyltransferase activity. Autoacetylation at Lys-275 is facilitated by interaction with EP300/p300: it prevents ubiquitination and subsequent degradation by the proteasome and promotes acetylation of target proteins. Deacetylated by HDAC3 and SIRT1. Deacetylation by HDAC3 promotes its ubiquitination and cytoplasmic localization. Sumoylated by UBE2I at Lys-378 and Lys-399, leading to increase of its histone acetyltransferase activity in UV-induced DNA damage response, as well as its translocation to nuclear bodies. Sumoylation with SUMO2 by PIAS4 at Lys-378 promotes repair of DNA double-strand breaks (DSBs) via homologous recombination (HR). Sumoylation by PIAS4 impairs interaction with PRKDC, inhibiting non-homologous end joining (NHEJ)-mediated repair of DSBs, thereby facilitating HR. Desumoylated by SENP3. In terms of processing, ubiquitinated by MDM2, leading to its proteasome-dependent degradation. Ubiquitination is prevented by autoacetylation at Lys-275. Ubiquitinated following deacetylation by HDAC3, leading to cytoplasmic localization. Deubiquitinated by USP7 following interaction with ATF3, promoting its stabilization.

Its subcellular location is the nucleus. The protein resides in the chromosome. The protein localises to the cytoplasm. It localises to the centromere. It is found in the kinetochore. Its subcellular location is the cytoskeleton. The protein resides in the spindle pole. The protein localises to the nucleolus. It localises to the perinuclear region. The catalysed reaction is L-lysyl-[histone] + acetyl-CoA = N(6)-acetyl-L-lysyl-[histone] + CoA + H(+). It carries out the reaction L-lysyl-[protein] + acetyl-CoA = N(6)-acetyl-L-lysyl-[protein] + CoA + H(+). The enzyme catalyses (2E)-butenoyl-CoA + L-lysyl-[protein] = N(6)-(2E)-butenoyl-L-lysyl-[protein] + CoA + H(+). It catalyses the reaction 2-hydroxyisobutanoyl-CoA + L-lysyl-[protein] = N(6)-(2-hydroxyisobutanoyl)-L-lysyl-[protein] + CoA + H(+). The catalysed reaction is (S)-lactoyl-CoA + L-lysyl-[protein] = N(6)-[(S)-lactoyl]-L-lysyl-[protein] + CoA + H(+). Its activity is regulated as follows. Acyltransferase and acetyltransferase activities are activated by phosphorylation and autoacetylation. Autoacetylation activates the histone acetyltransferase activity. Its function is as follows. Catalytic subunit of the NuA4 histone acetyltransferase complex, a multiprotein complex involved in transcriptional activation of select genes principally by acetylation of nucleosomal histones H2A and H4. Histone acetylation alters nucleosome-DNA interactions and promotes interaction of the modified histones with other proteins which positively regulate transcription. The NuA4 histone acetyltransferase complex is required for the activation of transcriptional programs associated with proto-oncogene mediated growth induction, tumor suppressor mediated growth arrest and replicative senescence, apoptosis, and DNA repair. The NuA4 complex plays a direct role in repair of DNA double-strand breaks (DSBs) by promoting homologous recombination (HR): the complex inhibits TP53BP1 binding to chromatin via MBTD1, which recognizes and binds histone H4 trimethylated at 'Lys-20' (H4K20me), and KAT5 that catalyzes acetylation of 'Lys-15' of histone H2A (H2AK15ac), thereby blocking the ubiquitination mark required for TP53BP1 localization at DNA breaks. Also involved in DSB repair by mediating acetylation of 'Lys-5' of histone H2AX (H2AXK5ac), promoting NBN/NBS1 assembly at the sites of DNA damage. The NuA4 complex plays a key role in hematopoietic stem cell maintenance and is required to maintain acetylated H2A.Z/H2AZ1 at MYC target genes. The NuA4 complex is also required for spermatid development by promoting acetylation of histones: histone hyperacetylation is required for histone replacement during the transition from round to elongating spermatids. Component of a SWR1-like complex that specifically mediates the removal of histone H2A.Z/H2AZ1 from the nucleosome. Also acetylates non-histone proteins, such as BMAL1, ATM, AURKB, CHKA, CGAS, ERCC4/XPF, LPIN1, TP53/p53, NDC80/HEC1, NR1D2, RAN, SOX4, FOXP3, SQSTM1, ULK1 and RUBCNL/Pacer. Directly acetylates and activates ATM. Promotes nucleotide excision repair (NER) by mediating acetylation of ERCC4/XPF, thereby promoting formation of the ERCC4-ERCC1 complex. Relieves NR1D2-mediated inhibition of APOC3 expression by acetylating NR1D2. Acts as a regulator of regulatory T-cells (Treg) by catalyzing FOXP3 acetylation, thereby promoting FOXP3 transcriptional repressor activity. Involved in skeletal myoblast differentiation by mediating acetylation of SOX4. Catalyzes acetylation of APBB1/FE65, increasing its transcription activator activity. Promotes transcription elongation during the activation phase of the circadian cycle by catalyzing acetylation of BMAL1, promoting elongation of circadian transcripts. Together with GSK3 (GSK3A or GSK3B), acts as a regulator of autophagy: phosphorylated at Ser-86 by GSK3 under starvation conditions, leading to activate acetyltransferase activity and promote acetylation of key autophagy regulators, such as ULK1 and RUBCNL/Pacer. Acts as a regulator of the cGAS-STING innate antiviral response by catalyzing acetylation the N-terminus of CGAS, thereby promoting CGAS DNA-binding and activation. Also regulates lipid metabolism by mediating acetylation of CHKA or LPIN1. Promotes lipolysis of lipid droplets following glucose deprivation by mediating acetylation of isoform 1 of CHKA, thereby promoting monomerization of CHKA and its conversion into a tyrosine-protein kinase. Acts as a regulator of fatty-acid-induced triacylglycerol synthesis by catalyzing acetylation of LPIN1, thereby promoting the synthesis of diacylglycerol. In addition to protein acetyltransferase, can use different acyl-CoA substrates, such as (2E)-butenoyl-CoA (crotonyl-CoA), S-lactoyl-CoA (lactyl-CoA) and 2-hydroxyisobutanoyl-CoA (2-hydroxyisobutyryl-CoA), and is able to mediate protein crotonylation, lactylation and 2-hydroxyisobutyrylation, respectively. Acts as a key regulator of chromosome segregation and kinetochore-microtubule attachment during mitosis by mediating acetylation or crotonylation of target proteins. Catalyzes acetylation of AURKB at kinetochores, increasing AURKB activity and promoting accurate chromosome segregation in mitosis. Acetylates RAN during mitosis, promoting microtubule assembly at mitotic chromosomes. Acetylates NDC80/HEC1 during mitosis, promoting robust kinetochore-microtubule attachment. Catalyzes crotonylation of MAPRE1/EB1, thereby ensuring accurate spindle positioning in mitosis. Catalyzes lactylation of NBN/NBS1 in response to DNA damage, thereby promoting DNA double-strand breaks (DSBs) via homologous recombination (HR). In Pongo abelii (Sumatran orangutan), this protein is Histone acetyltransferase KAT5.